Consider the following 407-residue polypeptide: Carbamoyl phosphate synthase small chain (407 aa).

The tract at residues 1–203 (MSQNESGTIA…EPCGEYEGKE (203 aa)) is CPSase. Residues S61, G255, and G257 each contribute to the L-glutamine site. Residues 207 to 405 (TVAAVDLGIK…CELMKNNSKE (199 aa)) form the Glutamine amidotransferase type-1 domain. The Nucleophile role is filled by C283. F284, Q287, N325, G327, and F328 together coordinate L-glutamine. Active-site residues include H378 and E380.

This sequence belongs to the CarA family. Composed of two chains; the small (or glutamine) chain promotes the hydrolysis of glutamine to ammonia, which is used by the large (or ammonia) chain to synthesize carbamoyl phosphate. Tetramer of heterodimers (alpha,beta)4.

The enzyme catalyses hydrogencarbonate + L-glutamine + 2 ATP + H2O = carbamoyl phosphate + L-glutamate + 2 ADP + phosphate + 2 H(+). It catalyses the reaction L-glutamine + H2O = L-glutamate + NH4(+). Its pathway is amino-acid biosynthesis; L-arginine biosynthesis; carbamoyl phosphate from bicarbonate: step 1/1. It participates in pyrimidine metabolism; UMP biosynthesis via de novo pathway; (S)-dihydroorotate from bicarbonate: step 1/3. In terms of biological role, small subunit of the glutamine-dependent carbamoyl phosphate synthetase (CPSase). CPSase catalyzes the formation of carbamoyl phosphate from the ammonia moiety of glutamine, carbonate, and phosphate donated by ATP, constituting the first step of 2 biosynthetic pathways, one leading to arginine and/or urea and the other to pyrimidine nucleotides. The small subunit (glutamine amidotransferase) binds and cleaves glutamine to supply the large subunit with the substrate ammonia. The polypeptide is Carbamoyl phosphate synthase small chain (Bifidobacterium longum (strain DJO10A)).